The following is a 443-amino-acid chain: tRNA(Ile2) 2-agmatinylcytidine synthetase TiaS (443 aa).

The protein belongs to the TiaS family.

The protein resides in the cytoplasm. The catalysed reaction is cytidine(34) in tRNA(Ile2) + agmatine + ATP + H2O = 2-agmatinylcytidine(34) in tRNA(Ile2) + AMP + 2 phosphate + 2 H(+). Functionally, ATP-dependent agmatine transferase that catalyzes the formation of 2-agmatinylcytidine (agm2C) at the wobble position (C34) of tRNA(Ile2), converting the codon specificity from AUG to AUA. This chain is tRNA(Ile2) 2-agmatinylcytidine synthetase TiaS, found in Saccharolobus islandicus (strain L.S.2.15 / Lassen #1) (Sulfolobus islandicus).